Here is a 453-residue protein sequence, read N- to C-terminus: Succinate-semialdehyde dehydrogenase (acetylating) (453 aa).

Position 188–193 (188–193 (ATGGAG)) interacts with NADP(+). The active site involves Cys242.

As to quaternary structure, homodimer.

The enzyme catalyses succinate semialdehyde + NADP(+) + CoA = succinyl-CoA + NADPH + H(+). In terms of biological role, catalyzes the reduction of succinate semialdehyde to succinyl-CoA. The enzyme is specific for succinate semialdehyde and succinyl-CoA, and only shows low activity with palmitoyl-CoA. There is no activity with NAD(+) as cosubstrate. In Clostridium kluyveri (strain ATCC 8527 / DSM 555 / NBRC 12016 / NCIMB 10680 / K1), this protein is Succinate-semialdehyde dehydrogenase (acetylating) (sucD).